A 475-amino-acid chain; its full sequence is MSGKTLYDKLWDSHLVQQRDDGSALIYIDLQLLHEVTSPQAFEGLRLAGRKPWRVSSSLATPDHNVPTTKKERISGVDGIEDPVSKIQVTTLDDNCNEFGITEFNMKDIRQGIVHVVGPEQGATLPGMTVVCGDSHTSTHGAFGALAHGIGTSEVEHVLATQCLVQKKSRNMLVRVDGELSPWVSAKDVVLAIIGAIGTAGGTGYAIEFGGTGIQSLSMEGRMTVCNMAIEAGARVGLIAVDDTTIEYVKGRPYAPKGEHWEMAVEAWKDLVSDKDAQFDEVVVIKAEDIKPQVTWGTSPEMVIAIDEPIPRAEDQKDPVKKEGYARAWKYMGLEGKSMLSDIVLDRVFIGSCTNSRIEDLRIAAQVVKGRKVASTLKQAIVVPGSGLVKAQAEKEGLHEIFEAAGLEWREPGCSMCLAMNADKLGAGEHSASTSNRNFEGRQGFGGRTHLVSPAMAAAAAIAGHFVDVNEFVKH.

Residues Cys-353, Cys-414, and Cys-417 each coordinate [4Fe-4S] cluster.

Belongs to the aconitase/IPM isomerase family. LeuC type 1 subfamily. In terms of assembly, heterodimer of LeuC and LeuD. [4Fe-4S] cluster serves as cofactor.

The catalysed reaction is (2R,3S)-3-isopropylmalate = (2S)-2-isopropylmalate. Its pathway is amino-acid biosynthesis; L-leucine biosynthesis; L-leucine from 3-methyl-2-oxobutanoate: step 2/4. Its function is as follows. Catalyzes the isomerization between 2-isopropylmalate and 3-isopropylmalate, via the formation of 2-isopropylmaleate. This is 3-isopropylmalate dehydratase large subunit from Marinomonas sp. (strain MWYL1).